The chain runs to 1337 residues: ATP-dependent helicase/nuclease subunit A (1337 aa).

The UvrD-like helicase ATP-binding domain occupies 3–484 (FTPSKEQEPA…LDLSDNYRSR (482 aa)). An ATP-binding site is contributed by 24–31 (ASAGSGKT). The 346-residue stretch at 522-867 (ADRDQASPAT…NVMTIHKSKG (346 aa)) folds into the UvrD-like helicase C-terminal domain.

It belongs to the helicase family. AddA subfamily. Heterodimer of AddA and AddB/RexB. The cofactor is Mg(2+).

It catalyses the reaction Couples ATP hydrolysis with the unwinding of duplex DNA by translocating in the 3'-5' direction.. The catalysed reaction is ATP + H2O = ADP + phosphate + H(+). The heterodimer acts as both an ATP-dependent DNA helicase and an ATP-dependent, dual-direction single-stranded exonuclease. Recognizes the chi site generating a DNA molecule suitable for the initiation of homologous recombination. The AddA nuclease domain is required for chi fragment generation; this subunit has the helicase and 3' -&gt; 5' nuclease activities. This is ATP-dependent helicase/nuclease subunit A from Limosilactobacillus fermentum (strain NBRC 3956 / LMG 18251) (Lactobacillus fermentum).